The following is a 307-amino-acid chain: Leucine-rich repeat-containing protein 59 (307 aa).

The Cytoplasmic portion of the chain corresponds to 1-247; the sequence is MARANGRSQN…LAQRQSRLRK (247 aa). 5 LRR repeats span residues 10–31, 40–61, 63–84, 86–107, and 109–131; these read NLRDKLDGNELDLSLSDLSEVP, KATALDLSCNKLTTLPDDFCNL, HIVRLDLSKNQIVQLPSEFGRL, NLQHLDLLQNHLMSLPVSFAQL, and SLKWLDLKDNPLKPDLAKVAGDC. Residues 156–222 adopt a coiled-coil conformation; that stretch reads EIELQRKLQL…LNSNKKAEEE (67 aa). Residues 170–238 are disordered; it reads KKKLEAKQRV…RMATPKEKKL (69 aa). Basic and acidic residues-rich tracts occupy residues 174–187 and 194–238; these read EAKQRVKEEQEREM and QQKE…EKKL. Residues 248-268 form a helical membrane-spanning segment; the sequence is IACILLFGLLVVLLVVVACRF. Residues 269 to 307 lie on the Lumenal side of the membrane; the sequence is TDLKAINMCTSVNAIYKETLSALHSNPVLERFLQDPSSQ.

Interacts with SGO1.

Its subcellular location is the microsome membrane. It is found in the endoplasmic reticulum membrane. The protein localises to the nucleus envelope. Required for nuclear import of FGF1. The chain is Leucine-rich repeat-containing protein 59 (lrrc59) from Xenopus laevis (African clawed frog).